The sequence spans 268 residues: Purine nucleoside phosphorylase (268 aa).

Phosphate-binding positions include Ser36, His68, 88 to 90 (RIH), and Ala120. Residue Glu189 coordinates a purine D-ribonucleoside. A phosphate-binding site is contributed by Ser208. A purine D-ribonucleoside is bound at residue Asn231.

Belongs to the PNP/MTAP phosphorylase family. Homotrimer.

It catalyses the reaction a purine 2'-deoxy-D-ribonucleoside + phosphate = a purine nucleobase + 2-deoxy-alpha-D-ribose 1-phosphate. It functions in the pathway purine metabolism; purine nucleoside salvage. The purine nucleoside phosphorylases catalyze the phosphorolytic breakdown of the N-glycosidic bond in the beta-(deoxy)ribonucleoside molecules, with the formation of the corresponding free purine bases and pentose-1-phosphate. Cleaves guanosine, inosine, 2'-deoxyguanosine and 2'-deoxyinosine. This chain is Purine nucleoside phosphorylase (punA), found in Mycobacterium bovis (strain ATCC BAA-935 / AF2122/97).